We begin with the raw amino-acid sequence, 75 residues long: MKNTINIQDQFLNQLRKEGIQVTVFLLNGFQLRGYIKGFDNFTVLLEVQGKQQLIYKHAISTFAPERNIHFETEQ.

Positions 9 to 69 (DQFLNQLRKE…ISTFAPERNI (61 aa)) constitute a Sm domain.

It belongs to the Hfq family. As to quaternary structure, homohexamer.

Functionally, RNA chaperone that binds small regulatory RNA (sRNAs) and mRNAs to facilitate mRNA translational regulation in response to envelope stress, environmental stress and changes in metabolite concentrations. Also binds with high specificity to tRNAs. The polypeptide is RNA-binding protein Hfq (Geobacillus kaustophilus (strain HTA426)).